Consider the following 438-residue polypeptide: Plasmalemma vesicle-associated protein (438 aa).

Topologically, residues 1-26 are cytoplasmic; it reads MGLSMDRSPYARTGDQQRGCWYYLRY. Residues 27–47 traverse the membrane as a helical; Signal-anchor for type II membrane protein segment; sequence FFLFVSLIQFLIILGLVLFMI. Topologically, residues 48–438 are extracellular; the sequence is YGNVHATTES…VVNPAAQPSG (391 aa). Asn82, Asn88, Asn112, and Asn150 each carry an N-linked (GlcNAc...) asparagine glycan. 3 coiled-coil regions span residues 140-160, 189-224, and 281-383; these read KQCQEQLKEVNKTCEALLFKL, KRQTEEQLEACGKARERQQQEQQVTEENLRKVQSLC, and EELA…ISAL. Residues 391 to 413 are disordered; the sequence is SLPAVPPRVSGPPPNPPPIDPAS. Residues 394 to 410 are compositionally biased toward pro residues; sequence AVPPRVSGPPPNPPPID.

As to quaternary structure, homodimer. In terms of tissue distribution, expressed in lung, kidney, spleen, heart, muscle, eye, pancreas, thyroid, thymus, submaxillary gland, prostate, epididymis, uterus and liver.

It is found in the cell membrane. The protein resides in the membrane. The protein localises to the caveola. It localises to the cytoplasm. Its subcellular location is the perinuclear region. Endothelial cell-specific membrane protein involved in the formation of the diaphragms that bridge endothelial fenestrae. It is also required for the formation of stomata of caveolae and transendothelial channels. Functions in microvascular permeability, endothelial fenestrae contributing to the passage of water and solutes and regulating transcellular versus paracellular flow in different organs. Plays a specific role in embryonic development. The polypeptide is Plasmalemma vesicle-associated protein (Plvap) (Mus musculus (Mouse)).